Consider the following 337-residue polypeptide: Phosphate acyltransferase (337 aa).

This sequence belongs to the PlsX family. Homodimer. Probably interacts with PlsY.

The protein localises to the cytoplasm. It catalyses the reaction a fatty acyl-[ACP] + phosphate = an acyl phosphate + holo-[ACP]. It functions in the pathway lipid metabolism; phospholipid metabolism. Its function is as follows. Catalyzes the reversible formation of acyl-phosphate (acyl-PO(4)) from acyl-[acyl-carrier-protein] (acyl-ACP). This enzyme utilizes acyl-ACP as fatty acyl donor, but not acyl-CoA. The sequence is that of Phosphate acyltransferase from Halalkalibacterium halodurans (strain ATCC BAA-125 / DSM 18197 / FERM 7344 / JCM 9153 / C-125) (Bacillus halodurans).